The primary structure comprises 114 residues: Ribonuclease P protein component (114 aa).

This sequence belongs to the RnpA family. In terms of assembly, consists of a catalytic RNA component (M1 or rnpB) and a protein subunit.

The enzyme catalyses Endonucleolytic cleavage of RNA, removing 5'-extranucleotides from tRNA precursor.. RNaseP catalyzes the removal of the 5'-leader sequence from pre-tRNA to produce the mature 5'-terminus. It can also cleave other RNA substrates such as 4.5S RNA. The protein component plays an auxiliary but essential role in vivo by binding to the 5'-leader sequence and broadening the substrate specificity of the ribozyme. This is Ribonuclease P protein component from Alkaliphilus oremlandii (strain OhILAs) (Clostridium oremlandii (strain OhILAs)).